A 304-amino-acid polypeptide reads, in one-letter code: Murein tetrapeptide carboxypeptidase (304 aa).

The Nucleophile role is filled by serine 106. Residues glutamate 200 and histidine 270 each act as charge relay system in the active site.

The protein belongs to the peptidase S66 family.

Its subcellular location is the cytoplasm. It catalyses the reaction N-acetyl-D-glucosaminyl-N-acetylmuramoyl-L-alanyl-meso-2,6-diaminoheptanedioyl-D-alanine + H2O = N-acetyl-D-glucosaminyl-N-acetylmuramoyl-L-alanyl-meso-2,6-diaminoheptanedioate + D-alanine. Its pathway is cell wall biogenesis; peptidoglycan recycling. Its function is as follows. Releases the terminal D-alanine residue from the cytoplasmic tetrapeptide recycling product L-Ala-gamma-D-Glu-meso-Dap-D-Ala. Can also cleave D-Ala from murein derivatives containing the tetrapeptide, i.e. MurNAc-tetrapeptide, UDP-MurNAc-tetrapeptide, GlcNAc-MurNAc-tetrapeptide, and GlcNAc-anhMurNAc-tetrapeptide. Does not act on murein sacculi or cross-linked muropeptides. The tripeptides produced by the LcdA reaction can then be reused as peptidoglycan building blocks; LcdA is thereby involved in murein recycling. The chain is Murein tetrapeptide carboxypeptidase (ldcA) from Escherichia coli O157:H7.